Consider the following 184-residue polypeptide: Ribosome-recycling factor (184 aa).

The protein belongs to the RRF family.

The protein resides in the cytoplasm. Functionally, responsible for the release of ribosomes from messenger RNA at the termination of protein biosynthesis. May increase the efficiency of translation by recycling ribosomes from one round of translation to another. In Clostridium botulinum (strain Okra / Type B1), this protein is Ribosome-recycling factor.